Reading from the N-terminus, the 369-residue chain is Coproporphyrin III ferrochelatase (369 aa).

2 residues coordinate Fe-coproporphyrin III: Ser61 and Tyr130. His197 and Glu286 together coordinate Fe(2+).

The protein belongs to the ferrochelatase family.

The protein resides in the cytoplasm. The enzyme catalyses Fe-coproporphyrin III + 2 H(+) = coproporphyrin III + Fe(2+). It participates in porphyrin-containing compound metabolism; protoheme biosynthesis. Functionally, involved in coproporphyrin-dependent heme b biosynthesis. Catalyzes the insertion of ferrous iron into coproporphyrin III to form Fe-coproporphyrin III. The chain is Coproporphyrin III ferrochelatase from Corynebacterium diphtheriae (strain ATCC 700971 / NCTC 13129 / Biotype gravis).